Consider the following 92-residue polypeptide: UPF0250 protein VP0718 (92 aa).

The protein belongs to the UPF0250 family.

This Vibrio parahaemolyticus serotype O3:K6 (strain RIMD 2210633) protein is UPF0250 protein VP0718.